We begin with the raw amino-acid sequence, 205 residues long: Ribosomal RNA small subunit methyltransferase G (205 aa).

Residues G76, L81, 127 to 128 (IE), and R140 each bind S-adenosyl-L-methionine.

The protein belongs to the methyltransferase superfamily. RNA methyltransferase RsmG family.

Its subcellular location is the cytoplasm. It carries out the reaction guanosine(527) in 16S rRNA + S-adenosyl-L-methionine = N(7)-methylguanosine(527) in 16S rRNA + S-adenosyl-L-homocysteine. Its function is as follows. Specifically methylates the N7 position of guanine in position 527 of 16S rRNA. The sequence is that of Ribosomal RNA small subunit methyltransferase G from Francisella tularensis subsp. holarctica (strain FTNF002-00 / FTA).